The following is a 306-amino-acid chain: tRNA dimethylallyltransferase 1 (306 aa).

15–22 (GPTGSGKS) is an ATP binding site. 17–22 (TGSGKS) provides a ligand contact to substrate. The interval 40-43 (DSMQ) is interaction with substrate tRNA.

It belongs to the IPP transferase family. Monomer. Requires Mg(2+) as cofactor.

The enzyme catalyses adenosine(37) in tRNA + dimethylallyl diphosphate = N(6)-dimethylallyladenosine(37) in tRNA + diphosphate. In terms of biological role, catalyzes the transfer of a dimethylallyl group onto the adenine at position 37 in tRNAs that read codons beginning with uridine, leading to the formation of N6-(dimethylallyl)adenosine (i(6)A). The polypeptide is tRNA dimethylallyltransferase 1 (Citrifermentans bemidjiense (strain ATCC BAA-1014 / DSM 16622 / JCM 12645 / Bem) (Geobacter bemidjiensis)).